The chain runs to 321 residues: MSILVIGATGTLGRQIVRSALDEGYQVRCLVRNLRKAAFLKEWGAKLIWGDLSQPESLLPALTGIRVIIDTSTSRPTDPAGVYQVDLKGKKALIDAAKAMKIEKFIFFSILNSEKYSQVPLMRIKTVTEELLKESGLNYTIFKLCGFFQGLIGQYAVPILDQQTVWITTESTSIAYMDTIDIARFTLRSLVLKETNNRVFPLVGTRSWNSADIIQLCERLSGQNAKVTRVPIAFLELARNTSCFFEWGWNIADRLAFTEVLSKSQFFNSSMDEVYKIFKIESTSTTILESYLQEYFSRILKRLKEINSQQSQKKKTSDLFV.

Belongs to the NmrA-type oxidoreductase family. Ycf39 subfamily.

The protein localises to the plastid. Its subcellular location is the cyanelle. Functionally, involved in assembly of photosystem II. The protein is Photosystem II assembly factor Ycf39 (ycf39) of Cyanophora paradoxa.